Consider the following 369-residue polypeptide: Naringenin,2-oxoglutarate 3-dioxygenase (369 aa).

Residues 193–297 form the Fe2OG dioxygenase domain; that stretch reads CVDMDQKVVV…RLSIATFQNP (105 aa). Fe cation-binding residues include histidine 220, aspartate 222, and histidine 278. Position 288 (arginine 288) interacts with 2-oxoglutarate.

The protein belongs to the iron/ascorbate-dependent oxidoreductase family. Requires Fe(2+) as cofactor. L-ascorbate is required as a cofactor.

The enzyme catalyses a (2S)-flavan-4-one + 2-oxoglutarate + O2 = a (2R,3R)-dihydroflavonol + succinate + CO2. Its pathway is secondary metabolite biosynthesis; flavonoid biosynthesis. Its function is as follows. Catalyzes the 3-beta-hydroxylation of 2S-flavanones to 2R,3R-dihydroflavonols which are intermediates in the biosynthesis of flavonols, anthocyanidins, catechins and proanthocyanidins in plants. The polypeptide is Naringenin,2-oxoglutarate 3-dioxygenase (AN3) (Petunia hybrida (Petunia)).